Here is a 90-residue protein sequence, read N- to C-terminus: UPF0335 protein bsl7135 (90 aa).

It belongs to the UPF0335 family.

This Bradyrhizobium diazoefficiens (strain JCM 10833 / BCRC 13528 / IAM 13628 / NBRC 14792 / USDA 110) protein is UPF0335 protein bsl7135.